The primary structure comprises 235 residues: MAKRSKAYEAAVAKIEADKVYAPIEAITLAKDTNPSKFDATVEVAFRLGVDPRKADQMVRGTVNLPHGTGKTARVLVFATGDKAEAAIAAGADFVGSDDLIEKIAAGWTDFDAAVATPDLMGKVGRLGKVLGPRNLMPNPKTGTVTPDVTKAVNDIKGGKIDFRVDKHSNLHFIIGKVSFDVNKLAENYAAALEEVLRLKPSASKGRYIQKATVATTFGPGITVDPNVTKVLVDA.

The protein belongs to the universal ribosomal protein uL1 family. In terms of assembly, part of the 50S ribosomal subunit.

Binds directly to 23S rRNA. The L1 stalk is quite mobile in the ribosome, and is involved in E site tRNA release. In terms of biological role, protein L1 is also a translational repressor protein, it controls the translation of the L11 operon by binding to its mRNA. In Paenarthrobacter aurescens (strain TC1), this protein is Large ribosomal subunit protein uL1.